A 235-amino-acid chain; its full sequence is tRNA pseudouridine synthase B (235 aa).

The Nucleophile role is filled by Asp-48.

It belongs to the pseudouridine synthase TruB family. Type 1 subfamily.

The enzyme catalyses uridine(55) in tRNA = pseudouridine(55) in tRNA. In terms of biological role, responsible for synthesis of pseudouridine from uracil-55 in the psi GC loop of transfer RNAs. The protein is tRNA pseudouridine synthase B of Parabacteroides distasonis (strain ATCC 8503 / DSM 20701 / CIP 104284 / JCM 5825 / NCTC 11152).